We begin with the raw amino-acid sequence, 229 residues long: Peptidase E (229 aa).

Active-site charge relay system residues include Ser-120, Asp-135, and His-157.

Belongs to the peptidase S51 family.

Its subcellular location is the cytoplasm. The enzyme catalyses Dipeptidase E catalyzes the hydrolysis of dipeptides Asp-|-Xaa. It does not act on peptides with N-terminal Glu, Asn or Gln, nor does it cleave isoaspartyl peptides.. Functionally, hydrolyzes dipeptides containing N-terminal aspartate residues. May play a role in allowing the cell to use peptide aspartate to spare carbon otherwise required for the synthesis of the aspartate family of amino acids. This chain is Peptidase E (pepE), found in Salmonella typhimurium (strain LT2 / SGSC1412 / ATCC 700720).